Consider the following 356-residue polypeptide: DNA polymerase IV (356 aa).

One can recognise a UmuC domain in the interval 6-187 (IIHIDMDYFF…LDIGDFPGVG (182 aa)). D10 and D105 together coordinate Mg(2+). Residue E106 is part of the active site.

Belongs to the DNA polymerase type-Y family. Monomer. Mg(2+) serves as cofactor.

The protein resides in the cytoplasm. The catalysed reaction is DNA(n) + a 2'-deoxyribonucleoside 5'-triphosphate = DNA(n+1) + diphosphate. Its function is as follows. Poorly processive, error-prone DNA polymerase involved in untargeted mutagenesis. Copies undamaged DNA at stalled replication forks, which arise in vivo from mismatched or misaligned primer ends. These misaligned primers can be extended by PolIV. Exhibits no 3'-5' exonuclease (proofreading) activity. May be involved in translesional synthesis, in conjunction with the beta clamp from PolIII. This chain is DNA polymerase IV, found in Staphylococcus epidermidis (strain ATCC 12228 / FDA PCI 1200).